We begin with the raw amino-acid sequence, 285 residues long: MRLIIVSGRSGSGKSTALDVLEDHGYYCIDNLPAGLLPELAERALIHTELAQPLVAVSIDARNLPSHLSRFPELLEEVRSRHIQCDVLYLDADEETLLKRFSETRRRHPLSSANRSLAEAIHDETQLLGPIVDLADLKVNTTNLNLYQLRDTIKLRLLNQPEPGTAFLVESFGFKRGMPVDADLVFDVRCLPNPYWKPELRAQSGLDAPVAEYLAAQPDVEEMFQDISSYLLKWLPRFAASNRAYVTIAIGCTGGHHRSVYLTERLGQVLQKSLKNVQVRHRDLS.

ATP is bound at residue 8-15 (GRSGSGKS). Position 60–63 (60–63 (DARN)) interacts with GTP.

It belongs to the RapZ-like family.

Functionally, displays ATPase and GTPase activities. This is Nucleotide-binding protein PFL_0912 from Pseudomonas fluorescens (strain ATCC BAA-477 / NRRL B-23932 / Pf-5).